We begin with the raw amino-acid sequence, 549 residues long: Probable protein kinase UbiB (549 aa).

Positions 123–501 (DFDETPLASA…QQQAHKSNYL (379 aa)) constitute a Protein kinase domain. Residues 129 to 137 (LASASISQV) and Lys-152 each bind ATP. Catalysis depends on Asp-287, which acts as the Proton acceptor. The next 2 helical transmembrane spans lie at 498 to 518 (SNYL…LFNQ) and 520 to 540 (ATLW…IIGW).

This sequence belongs to the ABC1 family. UbiB subfamily.

Its subcellular location is the cell inner membrane. It functions in the pathway cofactor biosynthesis; ubiquinone biosynthesis [regulation]. Its function is as follows. Is probably a protein kinase regulator of UbiI activity which is involved in aerobic coenzyme Q (ubiquinone) biosynthesis. The protein is Probable protein kinase UbiB of Shewanella sp. (strain ANA-3).